Reading from the N-terminus, the 523-residue chain is Asparagine--tRNA ligase (523 aa).

The tract at residues 329–350 (SARGDTPLAARSTARTPPVRTP) is disordered.

The protein belongs to the class-II aminoacyl-tRNA synthetase family. Homodimer.

The protein localises to the cytoplasm. The catalysed reaction is tRNA(Asn) + L-asparagine + ATP = L-asparaginyl-tRNA(Asn) + AMP + diphosphate + H(+). The protein is Asparagine--tRNA ligase of Treponema pallidum (strain Nichols).